The following is a 202-amino-acid chain: Prohormone-4 (202 aa).

The first 28 residues, 1 to 28, serve as a signal peptide directing secretion; sequence MVQRLCTSVAALSLALSACVFFPRAVMA. In terms of domain architecture, LDL-receptor class A spans 46 to 86; that stretch reads ACRPYEPFKCPGDDTCISIQYLCDGAPDCQDGYDEDSRLCT. Cystine bridges form between cysteine 47/cysteine 61, cysteine 55/cysteine 74, and cysteine 68/cysteine 85.

Its subcellular location is the secreted. The chain is Prohormone-4 from Apis mellifera (Honeybee).